A 339-amino-acid chain; its full sequence is Glyceraldehyde-3-phosphate dehydrogenase (339 aa).

NAD(+) is bound by residues 12–13 (RI), D39, R84, and S127. Residues 157–159 (SCT), T188, R203, 216–217 (TG), and R239 contribute to the D-glyceraldehyde 3-phosphate site. Residue C158 is the Nucleophile of the active site. N320 lines the NAD(+) pocket.

This sequence belongs to the glyceraldehyde-3-phosphate dehydrogenase family. Homotetramer.

It localises to the cytoplasm. It carries out the reaction D-glyceraldehyde 3-phosphate + phosphate + NAD(+) = (2R)-3-phospho-glyceroyl phosphate + NADH + H(+). Its pathway is carbohydrate degradation; glycolysis; pyruvate from D-glyceraldehyde 3-phosphate: step 1/5. Its function is as follows. Catalyzes the oxidative phosphorylation of glyceraldehyde 3-phosphate (G3P) to 1,3-bisphosphoglycerate (BPG) using the cofactor NAD. The first reaction step involves the formation of a hemiacetal intermediate between G3P and a cysteine residue, and this hemiacetal intermediate is then oxidized to a thioester, with concomitant reduction of NAD to NADH. The reduced NADH is then exchanged with the second NAD, and the thioester is attacked by a nucleophilic inorganic phosphate to produce BPG. This chain is Glyceraldehyde-3-phosphate dehydrogenase (gapA), found in Mycobacterium avium.